Reading from the N-terminus, the 319-residue chain is 4-hydroxy-3-methylbut-2-enyl diphosphate reductase (319 aa).

A [4Fe-4S] cluster-binding site is contributed by Cys-18. Residues His-47 and His-81 each contribute to the (2E)-4-hydroxy-3-methylbut-2-enyl diphosphate site. Residues His-47 and His-81 each coordinate dimethylallyl diphosphate. Isopentenyl diphosphate is bound by residues His-47 and His-81. [4Fe-4S] cluster is bound at residue Cys-103. His-131 is a binding site for (2E)-4-hydroxy-3-methylbut-2-enyl diphosphate. His-131 serves as a coordination point for dimethylallyl diphosphate. Position 131 (His-131) interacts with isopentenyl diphosphate. Residue Glu-133 is the Proton donor of the active site. Thr-172 contacts (2E)-4-hydroxy-3-methylbut-2-enyl diphosphate. [4Fe-4S] cluster is bound at residue Cys-202. Ser-230, Ser-231, Asn-232, and Ser-275 together coordinate (2E)-4-hydroxy-3-methylbut-2-enyl diphosphate. 4 residues coordinate dimethylallyl diphosphate: Ser-230, Ser-231, Asn-232, and Ser-275. Isopentenyl diphosphate contacts are provided by Ser-230, Ser-231, Asn-232, and Ser-275.

This sequence belongs to the IspH family. Requires [4Fe-4S] cluster as cofactor.

It carries out the reaction isopentenyl diphosphate + 2 oxidized [2Fe-2S]-[ferredoxin] + H2O = (2E)-4-hydroxy-3-methylbut-2-enyl diphosphate + 2 reduced [2Fe-2S]-[ferredoxin] + 2 H(+). The catalysed reaction is dimethylallyl diphosphate + 2 oxidized [2Fe-2S]-[ferredoxin] + H2O = (2E)-4-hydroxy-3-methylbut-2-enyl diphosphate + 2 reduced [2Fe-2S]-[ferredoxin] + 2 H(+). The protein operates within isoprenoid biosynthesis; dimethylallyl diphosphate biosynthesis; dimethylallyl diphosphate from (2E)-4-hydroxy-3-methylbutenyl diphosphate: step 1/1. It functions in the pathway isoprenoid biosynthesis; isopentenyl diphosphate biosynthesis via DXP pathway; isopentenyl diphosphate from 1-deoxy-D-xylulose 5-phosphate: step 6/6. Its function is as follows. Catalyzes the conversion of 1-hydroxy-2-methyl-2-(E)-butenyl 4-diphosphate (HMBPP) into a mixture of isopentenyl diphosphate (IPP) and dimethylallyl diphosphate (DMAPP). Acts in the terminal step of the DOXP/MEP pathway for isoprenoid precursor biosynthesis. The protein is 4-hydroxy-3-methylbut-2-enyl diphosphate reductase of Beijerinckia indica subsp. indica (strain ATCC 9039 / DSM 1715 / NCIMB 8712).